A 234-amino-acid polypeptide reads, in one-letter code: 1-(5-phosphoribosyl)-5-[(5-phosphoribosylamino)methylideneamino] imidazole-4-carboxamide isomerase (234 aa).

Asp8 serves as the catalytic Proton acceptor. The active-site Proton donor is Asp128.

Belongs to the HisA/HisF family.

It localises to the cytoplasm. It carries out the reaction 1-(5-phospho-beta-D-ribosyl)-5-[(5-phospho-beta-D-ribosylamino)methylideneamino]imidazole-4-carboxamide = 5-[(5-phospho-1-deoxy-D-ribulos-1-ylimino)methylamino]-1-(5-phospho-beta-D-ribosyl)imidazole-4-carboxamide. It participates in amino-acid biosynthesis; L-histidine biosynthesis; L-histidine from 5-phospho-alpha-D-ribose 1-diphosphate: step 4/9. The polypeptide is 1-(5-phosphoribosyl)-5-[(5-phosphoribosylamino)methylideneamino] imidazole-4-carboxamide isomerase (Cenarchaeum symbiosum (strain A)).